Consider the following 277-residue polypeptide: Shikimate dehydrogenase (NADP(+)) (277 aa).

Shikimate is bound by residues 15 to 17 (SKS) and Thr-62. Lys-66 serves as the catalytic Proton acceptor. Glu-78 contacts NADP(+). Shikimate contacts are provided by Asn-87 and Asp-103. NADP(+) is bound by residues 127–131 (GAGGA), 151–156 (NRTHEK), and Gly-238.

This sequence belongs to the shikimate dehydrogenase family. In terms of assembly, homodimer.

The catalysed reaction is shikimate + NADP(+) = 3-dehydroshikimate + NADPH + H(+). The protein operates within metabolic intermediate biosynthesis; chorismate biosynthesis; chorismate from D-erythrose 4-phosphate and phosphoenolpyruvate: step 4/7. Its function is as follows. Involved in the biosynthesis of the chorismate, which leads to the biosynthesis of aromatic amino acids. Catalyzes the reversible NADPH linked reduction of 3-dehydroshikimate (DHSA) to yield shikimate (SA). This is Shikimate dehydrogenase (NADP(+)) from Shewanella frigidimarina (strain NCIMB 400).